Consider the following 213-residue polypeptide: Ribosomal RNA small subunit methyltransferase G (213 aa).

Residues Gly-77, Phe-82, 130-131 (IE), and Arg-146 each bind S-adenosyl-L-methionine.

It belongs to the methyltransferase superfamily. RNA methyltransferase RsmG family.

The protein resides in the cytoplasm. It carries out the reaction guanosine(527) in 16S rRNA + S-adenosyl-L-methionine = N(7)-methylguanosine(527) in 16S rRNA + S-adenosyl-L-homocysteine. Functionally, specifically methylates the N7 position of guanine in position 527 of 16S rRNA. The sequence is that of Ribosomal RNA small subunit methyltransferase G from Bartonella tribocorum (strain CIP 105476 / IBS 506).